We begin with the raw amino-acid sequence, 183 residues long: Capsid protein (183 aa).

The disordered stretch occupies residues 136–183 (NAPILSTLPETTVVRRRGRSPRRRTPSPRRRRSQSPRRRRSQSRESQC). A compositionally biased stretch (basic residues) spans 149 to 176 (VRRRGRSPRRRTPSPRRRRSQSPRRRRS). S155, S162, and S170 each carry phosphoserine; by host. A 1; half-length repeat occupies 155 to 161 (SPRRRTP). The tract at residues 155–177 (SPRRRTPSPRRRRSQSPRRRRSQ) is 3 X 8 AA repeats of S-P-R-R-R-[PR]-S-Q. Residues 158-175 (RRTPSPRRRRSQSPRRRR) carry the Bipartite nuclear localization signal motif. 2 consecutive repeat copies span residues 162 to 169 (SPRRRRSQ) and 170 to 177 (SPRRRRSQ). Residues 177-183 (QSRESQC) are RNA binding.

This sequence belongs to the orthohepadnavirus core antigen family. Homodimerizes, then multimerizes. Interacts with cytosol exposed regions of viral L glycoprotein present in the reticulum-to-Golgi compartment. Interacts with human FLNB. Phosphorylated form interacts with host importin alpha; this interaction depends on the exposure of the NLS, which itself depends upon genome maturation and/or phosphorylation of the capsid protein. Interacts with host NUP153. In terms of processing, phosphorylated by host SRPK1, SRPK2, and maybe protein kinase C or GAPDH. Phosphorylation is critical for pregenomic RNA packaging. Protein kinase C phosphorylation is stimulated by HBx protein and may play a role in transport of the viral genome to the nucleus at the late step during the viral replication cycle.

It localises to the virion. The protein resides in the host cytoplasm. Self assembles to form an icosahedral capsid. Most capsids appear to be large particles with an icosahedral symmetry of T=4 and consist of 240 copies of capsid protein, though a fraction forms smaller T=3 particles consisting of 180 capsid proteins. Entering capsids are transported along microtubules to the nucleus. Phosphorylation of the capsid is thought to induce exposure of nuclear localization signal in the C-terminal portion of the capsid protein that allows binding to the nuclear pore complex via the importin (karyopherin-) alpha and beta. Capsids are imported in intact form through the nuclear pore into the nuclear basket, where it probably binds NUP153. Only capsids that contain the mature viral genome can release the viral DNA and capsid protein into the nucleoplasm. Immature capsids get stuck in the basket. Capsids encapsulate the pre-genomic RNA and the P protein. Pre-genomic RNA is reverse-transcribed into DNA while the capsid is still in the cytoplasm. The capsid can then either be directed to the nucleus, providing more genomes for transcription, or bud through the endoplasmic reticulum to provide new virions. The sequence is that of Capsid protein from Homo sapiens (Human).